Consider the following 246-residue polypeptide: Bis(5'-nucleosyl)-tetraphosphatase PrpE [asymmetrical] (246 aa).

The protein belongs to the PrpE family. Ni(2+) is required as a cofactor.

It carries out the reaction P(1),P(4)-bis(5'-guanosyl) tetraphosphate + H2O = GMP + GTP + 2 H(+). In terms of biological role, asymmetrically hydrolyzes Ap4p to yield AMP and ATP. The chain is Bis(5'-nucleosyl)-tetraphosphatase PrpE [asymmetrical] from Bacillus thuringiensis subsp. konkukian (strain 97-27).